We begin with the raw amino-acid sequence, 434 residues long: Tol-Pal system protein TolB (434 aa).

Residues 1-24 (MKFSAYLTTLFIVLFSLFIQTVQA) form the signal peptide.

It belongs to the TolB family. The Tol-Pal system is composed of five core proteins: the inner membrane proteins TolA, TolQ and TolR, the periplasmic protein TolB and the outer membrane protein Pal. They form a network linking the inner and outer membranes and the peptidoglycan layer.

It is found in the periplasm. In terms of biological role, part of the Tol-Pal system, which plays a role in outer membrane invagination during cell division and is important for maintaining outer membrane integrity. This Histophilus somni (strain 129Pt) (Haemophilus somnus) protein is Tol-Pal system protein TolB.